An 830-amino-acid polypeptide reads, in one-letter code: Serine/threonine-protein kinase pkn2 (830 aa).

Residues 1–605 lie on the Cytoplasmic side of the membrane; it reads MLAPDSLVLD…GELLRQRRRE (605 aa). Positions 13–283 constitute a Protein kinase domain; it reads FRVLRPLGSG…DALAAAHSAL (271 aa). Residues 19–27 and K42 each bind ATP; that span reads LGSGGMGEV. D135 (proton acceptor) is an active-site residue. The disordered stretch occupies residues 296-326; it reads VPQPGSGATPSSGTSVFGTGSASGSSSGPTG. The span at 299-326 shows a compositional bias: low complexity; sequence PGSGATPSSGTSVFGTGSASGSSSGPTG. A Guanylate cyclase domain is found at 396-511; the sequence is TVMLTDIQGF…EPMEVIEAVE (116 aa). The helical transmembrane segment at 606–623 threads the bilayer; that stretch reads AALVAGAVVLLGAGAAWL. Residues 624 to 830 lie on the Periplasmic side of the membrane; the sequence is SQRNDAGTRA…AIKSLKQKSD (207 aa).

It belongs to the protein kinase superfamily. Ser/Thr protein kinase family.

The protein localises to the cell membrane. It catalyses the reaction L-seryl-[protein] + ATP = O-phospho-L-seryl-[protein] + ADP + H(+). It carries out the reaction L-threonyl-[protein] + ATP = O-phospho-L-threonyl-[protein] + ADP + H(+). In terms of biological role, regulates the activity of endogenous beta-lactamase or related enzymes, by blocking their secretion by phosphorylation, in response to an external signal yet to be identified. The sequence is that of Serine/threonine-protein kinase pkn2 (pkn2) from Myxococcus xanthus.